The following is a 462-amino-acid chain: ATP synthase subunit beta (462 aa).

ATP is bound at residue 150–157 (GGAGVGKT).

The protein belongs to the ATPase alpha/beta chains family. In terms of assembly, F-type ATPases have 2 components, CF(1) - the catalytic core - and CF(0) - the membrane proton channel. CF(1) has five subunits: alpha(3), beta(3), gamma(1), delta(1), epsilon(1). CF(0) has three main subunits: a(1), b(2) and c(9-12). The alpha and beta chains form an alternating ring which encloses part of the gamma chain. CF(1) is attached to CF(0) by a central stalk formed by the gamma and epsilon chains, while a peripheral stalk is formed by the delta and b chains. In this bacterium the a and b subunits are transcribed but do not seem to be translated, thus the ATP synthase consists of the alpha, beta, gamma, delta, epsilon and c subunits.

It is found in the cell membrane. It catalyses the reaction ATP + H2O + 4 H(+)(in) = ADP + phosphate + 5 H(+)(out). Functionally, produces ATP from ADP in the presence of a proton gradient across the membrane. The catalytic sites are hosted primarily by the beta subunits. In Moorella thermoacetica (strain ATCC 39073 / JCM 9320), this protein is ATP synthase subunit beta.